Reading from the N-terminus, the 387-residue chain is S-adenosylmethionine synthase (387 aa).

H15 contacts ATP. D17 provides a ligand contact to Mg(2+). Residue E43 coordinates K(+). E56 and Q99 together coordinate L-methionine. The interval 99 to 109 is flexible loop; the sequence is QSPDIAQGVNA. Residues 166 to 168, 232 to 233, D241, 247 to 248, A264, and K268 each bind ATP; these read DAK, RF, and RK. D241 provides a ligand contact to L-methionine. K272 contacts L-methionine.

Belongs to the AdoMet synthase family. In terms of assembly, homotetramer; dimer of dimers. Mg(2+) is required as a cofactor. K(+) serves as cofactor.

The protein resides in the cytoplasm. The enzyme catalyses L-methionine + ATP + H2O = S-adenosyl-L-methionine + phosphate + diphosphate. It functions in the pathway amino-acid biosynthesis; S-adenosyl-L-methionine biosynthesis; S-adenosyl-L-methionine from L-methionine: step 1/1. Its function is as follows. Catalyzes the formation of S-adenosylmethionine (AdoMet) from methionine and ATP. The overall synthetic reaction is composed of two sequential steps, AdoMet formation and the subsequent tripolyphosphate hydrolysis which occurs prior to release of AdoMet from the enzyme. The protein is S-adenosylmethionine synthase of Dechloromonas aromatica (strain RCB).